A 623-amino-acid chain; its full sequence is Arginine decarboxylase 2 (623 aa).

N6-(pyridoxal phosphate)lysine is present on K109. 295–305 (LDCGGGLGVDY) provides a ligand contact to substrate.

It belongs to the Orn/Lys/Arg decarboxylase class-II family. SpeA subfamily. Pyridoxal 5'-phosphate serves as cofactor. Requires Mg(2+) as cofactor. In terms of tissue distribution, expressed in stems (at protein level).

The catalysed reaction is L-arginine + H(+) = agmatine + CO2. Its pathway is amine and polyamine biosynthesis; agmatine biosynthesis; agmatine from L-arginine: step 1/1. This Oryza sativa subsp. japonica (Rice) protein is Arginine decarboxylase 2 (ADC2).